The sequence spans 175 residues: 3-hydroxydecanoyl-[acyl-carrier-protein] dehydratase (175 aa).

His71 is a catalytic residue.

This sequence belongs to the thioester dehydratase family. FabA subfamily. Homodimer.

It localises to the cytoplasm. The enzyme catalyses a (3R)-hydroxyacyl-[ACP] = a (2E)-enoyl-[ACP] + H2O. The catalysed reaction is (3R)-hydroxydecanoyl-[ACP] = (2E)-decenoyl-[ACP] + H2O. It carries out the reaction (2E)-decenoyl-[ACP] = (3Z)-decenoyl-[ACP]. It functions in the pathway lipid metabolism; fatty acid biosynthesis. Functionally, necessary for the introduction of cis unsaturation into fatty acids. Catalyzes the dehydration of (3R)-3-hydroxydecanoyl-ACP to E-(2)-decenoyl-ACP and then its isomerization to Z-(3)-decenoyl-ACP. Can catalyze the dehydratase reaction for beta-hydroxyacyl-ACPs with saturated chain lengths up to 16:0, being most active on intermediate chain length. The sequence is that of 3-hydroxydecanoyl-[acyl-carrier-protein] dehydratase from Rhodopseudomonas palustris (strain BisB5).